The following is a 91-amino-acid chain: Small ribosomal subunit protein bS20 (91 aa).

This sequence belongs to the bacterial ribosomal protein bS20 family.

Binds directly to 16S ribosomal RNA. This Caulobacter sp. (strain K31) protein is Small ribosomal subunit protein bS20.